Consider the following 387-residue polypeptide: MATALVSPLTSQLNHEAVCSKFVLPKSPFMSGSKLFSSNMPCSTVPRRTRRSHCFASAKDMSFDHIPKQFRGDNLKDGVMQNFKNVPQYFYGLNSAQMDMFMTEDSPVRRQAEKVTEESISSRNNYLNNGGIWSMSGMNAADARRYSMSVQMYRGGGGGGGSERPRTAPPDLPSLLLDARICYLGMPIVPAVTELLVAQFMWLDYDNPTKPIYLYINSPGTQNEKMETVGSETEAYAIADTISYCKSDVYTINCGMAFGQAAMLLSLGKKGYRAVQPHSSTKLYLPKVNRSSGAAIDMWIKAKELDANTEYYIELLAKGTGKSKEQINEDIKRPKYLQAQAAIDYGIADKIADSQDSSFEKRDYDGTLAQRAMRPGGGSPAAPAGLR.

The transit peptide at 1–41 directs the protein to the chloroplast; that stretch reads MATALVSPLTSQLNHEAVCSKFVLPKSPFMSGSKLFSSNMP. The span at 355–365 shows a compositional bias: basic and acidic residues; it reads QDSSFEKRDYD. Residues 355-387 are disordered; it reads QDSSFEKRDYDGTLAQRAMRPGGGSPAAPAGLR.

Belongs to the peptidase S14 family. As to quaternary structure, component of the chloroplastic Clp protease core complex which consist of at least 16 proteins: CLPP4 (3 copies), CLPP5 (3 copies), CLPR4 (2 copies), ClpP1 (1 copy), CLPP6 (1 copy), CLPR2 (1 copy), CLPT1 (1 copy), CLPT2 (1 copy) and 3 copies of CLPP3 and/or CLPR1 and/or CLPR3. The core complex is organized in two heptameric rings, one containing CLPP3,4,5,6 in a 1:2:3:1 ratio and the other CLPP1 and CLPR1,2,3,4 in a 3:1:1:1:1 ratio.

The protein localises to the plastid. Its subcellular location is the chloroplast stroma. Required for chloroplast development and differentiation. In Arabidopsis thaliana (Mouse-ear cress), this protein is ATP-dependent Clp protease proteolytic subunit-related protein 1, chloroplastic.